The chain runs to 155 residues: Ribosome maturation factor RimP (155 aa).

The protein belongs to the RimP family.

It is found in the cytoplasm. Functionally, required for maturation of 30S ribosomal subunits. The polypeptide is Ribosome maturation factor RimP (Parabacteroides distasonis (strain ATCC 8503 / DSM 20701 / CIP 104284 / JCM 5825 / NCTC 11152)).